The primary structure comprises 211 residues: Nucleoside diphosphate kinase homolog 5 (211 aa).

The tract at residues 13 to 145 (EKTLALIKPD…EREIRFMFPA (133 aa)) is NDK.

This sequence belongs to the NDK family. In terms of assembly, component of the axonemal radial spoke complex 1 (RS1), at least composed of spoke head proteins RSPH1, RSPH3, RSPH9 and the cilia-specific component RSPH4A or sperm-specific component RSPH6A, spoke stalk proteins RSPH14, DNAJB13, DYDC1, ROPN1L and NME5, and the anchor protein IQUB. Interacts with IQUB. Expressed in the trachea, ependymal cells and oviduct (at protein level). Expressed predominantly in germ cells of the testis. Not expressed in testicular somatic cells.

The protein resides in the cell projection. It is found in the cilium. Its subcellular location is the cytoplasm. It localises to the cytoskeleton. The protein localises to the flagellum axoneme. Its function is as follows. Functions as part of axonemal radial spoke complexes that play an important part in the motility of sperm and cilia. Does not seem to have nucleoside diphosphate kinase (NDPK) activity. Confers protection from cell death by BAX and alters the cellular levels of several antioxidant enzymes including GPX5. May play a role in spermiogenesis by increasing the ability of late-stage spermatids to eliminate reactive oxygen species. In Mus musculus (Mouse), this protein is Nucleoside diphosphate kinase homolog 5 (Nme5).